Consider the following 124-residue polypeptide: MSGRGKGGKVKGKAKSRSNRAGLQFPVGRIHRLLRKGNYAERVGAGAPVYLAAVMEYLAAEVLELAGNAARDNKKTRIIPRHLQLAIRNDEELNKLLSGVTIAQGGVLPNIQAVLLPKKTEKKA.

The span at 1-18 (MSGRGKGGKVKGKAKSRS) shows a compositional bias: basic residues. The disordered stretch occupies residues 1 to 21 (MSGRGKGGKVKGKAKSRSNRA). S2 carries the N-acetylserine modification. The residue at position 2 (S2) is a Phosphoserine. K36 carries the post-translational modification N6-succinyllysine. At Q104 the chain carries N5-methylglutamine. K119 is covalently cross-linked (Glycyl lysine isopeptide (Lys-Gly) (interchain with G-Cter in ubiquitin)). T120 is subject to Phosphothreonine.

The protein belongs to the histone H2A family. As to quaternary structure, the nucleosome is a histone octamer containing two molecules each of H2A, H2B, H3 and H4 assembled in one H3-H4 heterotetramer and two H2A-H2B heterodimers. The octamer wraps approximately 147 bp of DNA. In terms of processing, the chromatin-associated form, but not the free cytoplasmic form, is phosphorylated on Thr-120 by NHK-1 during mitosis, and dephosphorylated during S-phase. Also phosphorylated on Thr-120 by NHK-1 during prophase I of meiosis; which is required for acetylation of H3 'Lys-14' and H4 'Lys-5', diassembly of the synaptonemal complex, and karyosome formation. Monoubiquitination of Lys-119 by sce/dRING gives a specific tag for epigenetic transcriptional repression. Post-translationally, phosphorylation on Ser-2 is enhanced during mitosis. Phosphorylation on Ser-2 directly represses transcription.

Its subcellular location is the nucleus. It is found in the chromosome. Core component of nucleosome. Nucleosomes wrap and compact DNA into chromatin, limiting DNA accessibility to the cellular machineries which require DNA as a template. Histones thereby play a central role in transcription regulation, DNA repair, DNA replication and chromosomal stability. DNA accessibility is regulated via a complex set of post-translational modifications of histones, also called histone code, and nucleosome remodeling. This chain is Histone H2A (His2A), found in Drosophila erecta (Fruit fly).